Reading from the N-terminus, the 500-residue chain is uncharacterized protein (500 aa).

Positions 1–20 (MHSIIFKAAVALLGVSTAAG) are cleaved as a signal peptide. Asparagine 43 carries N-linked (GlcNAc...) asparagine glycosylation. Residues 60 to 232 (TALRPDCIIA…TAFTVKTHTQ (173 aa)) form the FAD-binding PCMH-type domain. Histidine 98 is subject to Pros-8alpha-FAD histidine. N-linked (GlcNAc...) asparagine glycans are attached at residues asparagine 194, asparagine 201, asparagine 246, asparagine 299, and asparagine 414.

The protein belongs to the oxygen-dependent FAD-linked oxidoreductase family. It depends on FAD as a cofactor.

The protein localises to the secreted. This is an uncharacterized protein from Arthroderma benhamiae (strain ATCC MYA-4681 / CBS 112371) (Trichophyton mentagrophytes).